A 181-amino-acid polypeptide reads, in one-letter code: Ribonuclease HII (181 aa).

An RNase H type-2 domain is found at 1–181 (MICGIDEVGR…SLHRRNFKLI (181 aa)). 3 residues coordinate a divalent metal cation: aspartate 6, glutamate 7, and aspartate 98.

The protein belongs to the RNase HII family. Mn(2+) is required as a cofactor. Requires Mg(2+) as cofactor.

Its subcellular location is the cytoplasm. The catalysed reaction is Endonucleolytic cleavage to 5'-phosphomonoester.. In terms of biological role, endonuclease that specifically degrades the RNA of RNA-DNA hybrids. The protein is Ribonuclease HII of Borrelia garinii subsp. bavariensis (strain ATCC BAA-2496 / DSM 23469 / PBi) (Borreliella bavariensis).